A 567-amino-acid chain; its full sequence is Arginine--tRNA ligase (567 aa).

The 'HIGH' region signature appears at 121-131 (ANPNGPLHVGH).

The protein belongs to the class-I aminoacyl-tRNA synthetase family.

The protein localises to the cytoplasm. The enzyme catalyses tRNA(Arg) + L-arginine + ATP = L-arginyl-tRNA(Arg) + AMP + diphosphate. The chain is Arginine--tRNA ligase from Methanosarcina acetivorans (strain ATCC 35395 / DSM 2834 / JCM 12185 / C2A).